We begin with the raw amino-acid sequence, 232 residues long: Translation initiation factor IF-3 (232 aa).

Disordered regions lie at residues 1–21 (MAIQ…RTNR) and 184–232 (LQSQ…AAQR). The segment covering 193–208 (AAAAAAPAAAPAAGAP) has biased composition (low complexity). Over residues 209-222 (APTPAPAPAAPAPA) the composition is skewed to pro residues. Residues 223 to 232 (PAAADPAAQR) are compositionally biased toward low complexity.

Belongs to the IF-3 family. As to quaternary structure, monomer.

It is found in the cytoplasm. Its function is as follows. IF-3 binds to the 30S ribosomal subunit and shifts the equilibrium between 70S ribosomes and their 50S and 30S subunits in favor of the free subunits, thus enhancing the availability of 30S subunits on which protein synthesis initiation begins. The protein is Translation initiation factor IF-3 of Anaeromyxobacter sp. (strain K).